Here is a 390-residue protein sequence, read N- to C-terminus: Galactokinase (390 aa).

33–36 (EHTD) is a binding site for substrate. ATP contacts are provided by residues Ser-67 and 124–130 (GAGLSSS). 2 residues coordinate Mg(2+): Ser-130 and Glu-162. The Proton acceptor role is filled by Asp-174. Tyr-224 contacts substrate.

Belongs to the GHMP kinase family. GalK subfamily.

It is found in the cytoplasm. It catalyses the reaction alpha-D-galactose + ATP = alpha-D-galactose 1-phosphate + ADP + H(+). It participates in carbohydrate metabolism; galactose metabolism. Catalyzes the transfer of the gamma-phosphate of ATP to D-galactose to form alpha-D-galactose-1-phosphate (Gal-1-P). This Exiguobacterium sibiricum (strain DSM 17290 / CCUG 55495 / CIP 109462 / JCM 13490 / 255-15) protein is Galactokinase.